Reading from the N-terminus, the 416-residue chain is MALSITRGLLLLAALCCLAPTSLAGVLQGHAVQETDDTAHQEAACHKIAPNLANFAFSIYHKLAHQSNTSNIFFSPVSIASAFAMLSLGAKGNTHTEILEGLGFNLTELAEAEIHKGFQHLLHTLNQPNHQLQLTTGNGLFINESAKLVDTFLEDVKNLHHSKAFSINFRDAEEAKKKINDYVEKGSHGKIVDLVKDLDQDTVFALVNYISFKGKWEKPFEVEHTTERDFHVNEQTTVKVPMMNRLGMFDLHYCDKLASWVLLLDYVGNVTACFILPDLGKLQQLEDKLNNELLAKFLEKKYASSANLHLPKLSISETYDLKTVLGELGINRVFSNGADLSGITEEQPLMVSKALHKAALTIDEKGTEAAGATFLEAIPMSLPPDVEFNRPFLCILYDRNTKSPLFVGKVVNPTQA.

Residues 1 to 24 (MALSITRGLLLLAALCCLAPTSLA) form the signal peptide. Residues Asn68, Asn105, Asn143, and Asn269 are each glycosylated (N-linked (GlcNAc...) asparagine). An RCL region spans residues 371–390 (GATFLEAIPMSLPPDVEFNR). The residue at position 381 (Ser381) is a Phosphoserine.

Belongs to the serpin family. As to quaternary structure, interacts with CELA2A. Interacts with ERGIC3 and LMAN1/ERGIC53. Interacts with PRSS1/Trypsin. In terms of tissue distribution, plasma.

The protein resides in the secreted. Its function is as follows. Inhibits human leukocyte elastase, pig pancreatic elastase and bovine trypsin on a 1:1 molar basis. This Ovis aries (Sheep) protein is Alpha-1-antiproteinase.